Consider the following 136-residue polypeptide: Large ribosomal subunit protein uL16c (136 aa).

It belongs to the universal ribosomal protein uL16 family. Part of the 50S ribosomal subunit.

It is found in the plastid. It localises to the chloroplast. The polypeptide is Large ribosomal subunit protein uL16c (Chlamydomonas reinhardtii (Chlamydomonas smithii)).